Here is a 497-residue protein sequence, read N- to C-terminus: Probable cytosol aminopeptidase (497 aa).

2 residues coordinate Mn(2+): lysine 263 and aspartate 268. Residue lysine 275 is part of the active site. Residues aspartate 286, aspartate 345, and glutamate 347 each contribute to the Mn(2+) site. Arginine 349 is an active-site residue.

Belongs to the peptidase M17 family. Requires Mn(2+) as cofactor.

It localises to the cytoplasm. The enzyme catalyses Release of an N-terminal amino acid, Xaa-|-Yaa-, in which Xaa is preferably Leu, but may be other amino acids including Pro although not Arg or Lys, and Yaa may be Pro. Amino acid amides and methyl esters are also readily hydrolyzed, but rates on arylamides are exceedingly low.. The catalysed reaction is Release of an N-terminal amino acid, preferentially leucine, but not glutamic or aspartic acids.. Its function is as follows. Presumably involved in the processing and regular turnover of intracellular proteins. Catalyzes the removal of unsubstituted N-terminal amino acids from various peptides. This chain is Probable cytosol aminopeptidase, found in Sinorhizobium medicae (strain WSM419) (Ensifer medicae).